The primary structure comprises 147 residues: Large ribosomal subunit protein bL9 (147 aa).

The protein belongs to the bacterial ribosomal protein bL9 family.

Functionally, binds to the 23S rRNA. This is Large ribosomal subunit protein bL9 from Clostridium novyi (strain NT).